A 119-amino-acid chain; its full sequence is Large ribosomal subunit protein uL18 (119 aa).

Belongs to the universal ribosomal protein uL18 family. As to quaternary structure, part of the 50S ribosomal subunit; part of the 5S rRNA/L5/L18/L25 subcomplex. Contacts the 5S and 23S rRNAs.

Its function is as follows. This is one of the proteins that bind and probably mediate the attachment of the 5S RNA into the large ribosomal subunit, where it forms part of the central protuberance. This Borrelia duttonii (strain Ly) protein is Large ribosomal subunit protein uL18.